The sequence spans 502 residues: 4,4'-diapophytoene desaturase (4,4'-diaponeurosporene-forming) (502 aa).

5-17 (VIGAGVTGLAAAA) is an FAD binding site.

Belongs to the carotenoid/retinoid oxidoreductase family. CrtN subfamily.

It catalyses the reaction 15-cis-4,4'-diapophytoene + 3 FAD + 3 H(+) = all-trans-4,4'-diaponeurosporene + 3 FADH2. It participates in carotenoid biosynthesis; staphyloxanthin biosynthesis; staphyloxanthin from farnesyl diphosphate: step 2/5. Functionally, involved in the biosynthesis of the yellow-orange carotenoid staphyloxanthin, which plays a role in the virulence via its protective function against oxidative stress. Catalyzes three successive dehydrogenation reactions that lead to the introduction of three double bonds into 4,4'-diapophytoene (dehydrosqualene), with 4,4'-diapophytofluene and 4,4'-diapo-zeta-carotene as intermediates, and 4,4'-diaponeurosporene (the major deep-yellow pigment in staphylococci strains) as the end product. The sequence is that of 4,4'-diapophytoene desaturase (4,4'-diaponeurosporene-forming) from Staphylococcus aureus (strain MW2).